The sequence spans 551 residues: Cysteine desulfurase SufS (551 aa).

A signal peptide spans 1-22 (MRPSSAAWICLLLRIANYTCYS). Residue K327 is modified to N6-(pyridoxal phosphate)lysine. The active-site Cysteine persulfide intermediate is the C500.

This sequence belongs to the class-V pyridoxal-phosphate-dependent aminotransferase family. Csd subfamily. In terms of assembly, monomer. Interacts with SufE; interaction enhances cysteine desulfurase activity of SufS. Pyridoxal 5'-phosphate is required as a cofactor.

It localises to the plastid. The protein localises to the apicoplast. The enzyme catalyses (sulfur carrier)-H + L-cysteine = (sulfur carrier)-SH + L-alanine. Its pathway is cofactor biosynthesis; iron-sulfur cluster biosynthesis. Its function is as follows. Catalyzes sulfur activation and mobilization in sulfur mobilization (SUF) pathway for iron-sulfur (Fe-S) cluster biogenesis. Active when in complex with a partner protein SufE. Required for apicoplast maintenance. Plays a role in the development of sporozoites in oocysts in mosquitoes. The chain is Cysteine desulfurase SufS from Plasmodium vivax.